The chain runs to 227 residues: Cytidylate kinase (227 aa).

ATP is bound at residue 12–20 (GPSGAGKGT).

Belongs to the cytidylate kinase family. Type 1 subfamily.

It is found in the cytoplasm. It carries out the reaction CMP + ATP = CDP + ADP. It catalyses the reaction dCMP + ATP = dCDP + ADP. The polypeptide is Cytidylate kinase (Xanthomonas euvesicatoria pv. vesicatoria (strain 85-10) (Xanthomonas campestris pv. vesicatoria)).